The chain runs to 437 residues: Trigger factor (437 aa).

The PPIase FKBP-type domain occupies 161–246 (DDQVNIDFVG…VNSVSAPVLP (86 aa)).

Belongs to the FKBP-type PPIase family. Tig subfamily.

Its subcellular location is the cytoplasm. The enzyme catalyses [protein]-peptidylproline (omega=180) = [protein]-peptidylproline (omega=0). In terms of biological role, involved in protein export. Acts as a chaperone by maintaining the newly synthesized protein in an open conformation. Functions as a peptidyl-prolyl cis-trans isomerase. This chain is Trigger factor, found in Pseudomonas putida (strain ATCC 700007 / DSM 6899 / JCM 31910 / BCRC 17059 / LMG 24140 / F1).